The following is a 203-amino-acid chain: Acid phosphatase (203 aa).

Histidine 13 functions as the Tele-phosphohistidine intermediate in the catalytic mechanism. Residue glutamate 85 is the Proton donor/acceptor of the active site.

The protein belongs to the phosphoglycerate mutase family. As to quaternary structure, homodimer.

It catalyses the reaction a phosphate monoester + H2O = an alcohol + phosphate. It carries out the reaction beta-D-fructose 1,6-bisphosphate + H2O = beta-D-fructose 6-phosphate + phosphate. It participates in carbohydrate biosynthesis; gluconeogenesis. Its activity is regulated as follows. In contrast to classical FBPases, is resistant to inhibition by lithium. Its function is as follows. Phosphatase with a broad specificity. Can dephosphorylate a variety of substrates including phosphorylated sugars like fructose-6-phosphate (F6P). Is able to function in vivo as a fructose-1,6-bisphosphatase (FBPase) and to maintain gluconeogenesis when the classical FBPase GlpX is absent. Shows negligible phosphoglycerate mutase activity. Has no phosphatase activity against 3-phosphoglycerate, 2,3-bisphosphoglycerate, or hydrophobic substrates such as alpha-napthyl phosphate. This chain is Acid phosphatase, found in Mycobacterium tuberculosis (strain ATCC 25618 / H37Rv).